The sequence spans 264 residues: 3-methyl-2-oxobutanoate hydroxymethyltransferase (264 aa).

Residues Asp-41 and Asp-80 each coordinate Mg(2+). 3-methyl-2-oxobutanoate is bound by residues 41-42 (DS), Asp-80, and Lys-109. Glu-111 is a binding site for Mg(2+). Glu-178 acts as the Proton acceptor in catalysis.

The protein belongs to the PanB family. As to quaternary structure, homodecamer; pentamer of dimers. Requires Mg(2+) as cofactor.

It is found in the cytoplasm. The enzyme catalyses 3-methyl-2-oxobutanoate + (6R)-5,10-methylene-5,6,7,8-tetrahydrofolate + H2O = 2-dehydropantoate + (6S)-5,6,7,8-tetrahydrofolate. It participates in cofactor biosynthesis; (R)-pantothenate biosynthesis; (R)-pantoate from 3-methyl-2-oxobutanoate: step 1/2. Its function is as follows. Catalyzes the reversible reaction in which hydroxymethyl group from 5,10-methylenetetrahydrofolate is transferred onto alpha-ketoisovalerate to form ketopantoate. The polypeptide is 3-methyl-2-oxobutanoate hydroxymethyltransferase (Thermosipho melanesiensis (strain DSM 12029 / CIP 104789 / BI429)).